Consider the following 396-residue polypeptide: Acetate kinase (396 aa).

Asn8 contributes to the Mg(2+) binding site. Lys15 is an ATP binding site. Arg89 contacts substrate. The active-site Proton donor/acceptor is Asp146. ATP contacts are provided by residues 206-210, 283-285, and 331-335; these read HIGNG, DMR, and GVGEN. Position 383 (Glu383) interacts with Mg(2+).

Belongs to the acetokinase family. In terms of assembly, homodimer. Mg(2+) is required as a cofactor. Requires Mn(2+) as cofactor.

The protein resides in the cytoplasm. It catalyses the reaction acetate + ATP = acetyl phosphate + ADP. Its pathway is metabolic intermediate biosynthesis; acetyl-CoA biosynthesis; acetyl-CoA from acetate: step 1/2. Its function is as follows. Catalyzes the formation of acetyl phosphate from acetate and ATP. Can also catalyze the reverse reaction. The polypeptide is Acetate kinase (Streptococcus pneumoniae (strain Hungary19A-6)).